The sequence spans 203 residues: Tic20 family protein Ycf60 (203 aa).

5 helical membrane passes run 2-22 (IRLF…RLAI), 51-71 (IIPY…YVLP), 84-104 (ILLP…VTFF), 131-151 (ILLF…PIEF), and 153-173 (ISFI…STIT).

It belongs to the Tic20 family.

Its subcellular location is the plastid. The protein resides in the chloroplast membrane. The sequence is that of Tic20 family protein Ycf60 (ycf60) from Porphyra purpurea (Red seaweed).